A 412-amino-acid polypeptide reads, in one-letter code: G-protein coupled receptor homolog UL33 (412 aa).

Residues 1 to 35 (MDTIIHNTTNRSTDTPHVNITCNITEPLSAIRTTE) lie on the Virion surface side of the membrane. N-linked (GlcNAc...) asparagine; by host glycosylation is found at N7, N19, and N23. A helical transmembrane segment spans residues 36–56 (AVINTFIIFVGGPLNAIVLIT). Topologically, residues 57 to 80 (QLLTNRVLGYSTPTIYMTNLYSTN) are intravirion. The helical transmembrane segment at 81 to 101 (FLTLTVLPFIVLSNQWLLPAS) threads the bilayer. Over 102–106 (VASCK) the chain is Virion surface. C105 and C188 are oxidised to a cystine. A helical transmembrane segment spans residues 107–127 (FLSVIYYSSCTVGFATVALIA). Over 128–147 (ADRYRVLHKRTYARQSYRST) the chain is Intravirion. The helical transmembrane segment at 148–168 (YIILLLTWFAGLIFSMPAAVY) threads the bilayer. Topologically, residues 169 to 206 (TTVVIHNGTNGQSSNGHATCVLYFIADEVYTVLLSWKV) are virion surface. The chain crosses the membrane as a helical span at residues 207–227 (LLTLVWGAAPVIMMTWFYAFF). At 228 to 244 (YSTVQRASQKQRSRTLT) the chain is on the intravirion side. The helical transmembrane segment at 245 to 265 (FVSVLLISFVALQTPYVSIMI) threads the bilayer. Residues 266 to 292 (FNSYATAAWPMDCEHLTLRRTIGTLSR) lie on the Virion surface side of the membrane. The helical transmembrane segment at 293-313 (LVPHLHCLINPILYALLGHDF) threads the bilayer. Over 314-412 (LQRMRQCFRG…SQSHHNLSGV (99 aa)) the chain is Intravirion. The disordered stretch occupies residues 377–412 (NFPSGTWKGGQKTASNDTSTKIPHRLSQSHHNLSGV). Positions 388–397 (KTASNDTSTK) are enriched in polar residues.

The protein belongs to the G-protein coupled receptor 1 family. Heterodimerizes with US28.

It is found in the virion. Its subcellular location is the host cell membrane. The protein localises to the host cytoplasm. Its function is as follows. G-protein-coupled receptor (vGPCR) that constitutively activates multiple oncogenic signaling pathways including STAT3, AP-1, phospholipase C, NF-kappa-B or cAMP-responsive element (CRE) pathways. Plays an important role in viral reactivation from latency through activation of host CREB1, facilitating its recruitment to the viral major immediate early (MIE) genes. In turn, expression of the MIE-driven genes such as UL123 are de-repressed. Also facilitates virus dissemination via the extracellular and cell-to-cell route. This is G-protein coupled receptor homolog UL33 (UL33) from Human cytomegalovirus (strain Merlin) (HHV-5).